Consider the following 287-residue polypeptide: Bifunctional protein FolD (287 aa).

NADP(+) contacts are provided by residues 165 to 167 (GRS), Ser190, and Ile231.

Belongs to the tetrahydrofolate dehydrogenase/cyclohydrolase family. As to quaternary structure, homodimer.

It catalyses the reaction (6R)-5,10-methylene-5,6,7,8-tetrahydrofolate + NADP(+) = (6R)-5,10-methenyltetrahydrofolate + NADPH. It carries out the reaction (6R)-5,10-methenyltetrahydrofolate + H2O = (6R)-10-formyltetrahydrofolate + H(+). It participates in one-carbon metabolism; tetrahydrofolate interconversion. In terms of biological role, catalyzes the oxidation of 5,10-methylenetetrahydrofolate to 5,10-methenyltetrahydrofolate and then the hydrolysis of 5,10-methenyltetrahydrofolate to 10-formyltetrahydrofolate. The sequence is that of Bifunctional protein FolD from Trichodesmium erythraeum (strain IMS101).